Reading from the N-terminus, the 161-residue chain is Lipoprotein signal peptidase (161 aa).

The next 2 helical transmembrane spans lie at 64–84 (YRVPFFIITTSVAVVFLAWFY) and 92–114 (VLGRCAVSLVLGGAIGNLIDRVR). Active-site residues include D120 and D138. The helical transmembrane segment at 131–151 (WPAFNVADSAICVGVGMLLLA) threads the bilayer.

The protein belongs to the peptidase A8 family.

The protein resides in the cell inner membrane. The enzyme catalyses Release of signal peptides from bacterial membrane prolipoproteins. Hydrolyzes -Xaa-Yaa-Zaa-|-(S,diacylglyceryl)Cys-, in which Xaa is hydrophobic (preferably Leu), and Yaa (Ala or Ser) and Zaa (Gly or Ala) have small, neutral side chains.. It functions in the pathway protein modification; lipoprotein biosynthesis (signal peptide cleavage). Functionally, this protein specifically catalyzes the removal of signal peptides from prolipoproteins. The polypeptide is Lipoprotein signal peptidase (Syntrophotalea carbinolica (strain DSM 2380 / NBRC 103641 / GraBd1) (Pelobacter carbinolicus)).